The primary structure comprises 662 residues: Zinc finger protein 17 (662 aa).

The 94-residue stretch at 8 to 101 folds into the KRAB domain; sequence MVFEDVAIHF…LLKDILHLAE (94 aa). C2H2-type zinc fingers lie at residues 190-212, 218-240, 246-268, 274-296, 302-324, 358-380, 386-408, 414-436, 442-464, 470-492, 498-520, 526-548, 554-576, 582-604, 610-632, and 638-660; these read YSCT…QKIH, YECS…QRNH, YKCS…QKIH, YECS…QRIH, YVCS…QKIH, FYCC…QRVH, YECN…QKVH, YECS…QRVH, YECN…QRVH, FECS…QRIH, YECS…RRNH, FECT…QKVH, YKCS…ERVH, YECS…RRIH, and YQCS…QKVH.

The protein belongs to the krueppel C2H2-type zinc-finger protein family.

The protein resides in the nucleus. Its function is as follows. May be involved in transcriptional regulation. This chain is Zinc finger protein 17 (ZNF17), found in Homo sapiens (Human).